We begin with the raw amino-acid sequence, 291 residues long: Gamma-sarcoglycan (291 aa).

Over 1–37 (MVREQYTTATEGICIERPENQYVYKIGIYGWRKRCLY) the chain is Cytoplasmic. A helical; Signal-anchor for type II membrane protein transmembrane segment spans residues 38–58 (LFVLLLLIILVVNLALTIWIL). The Extracellular portion of the chain corresponds to 59–291 (KVMWFSPAGM…TCQEHNHICL (233 aa)). N-linked (GlcNAc...) asparagine glycosylation occurs at N110. 2 disulfides stabilise this stretch: C265/C290 and C267/C283.

The protein belongs to the sarcoglycan beta/delta/gamma/zeta family. In terms of assembly, interacts with the syntrophin SNTA1. Cross-link to form 2 major subcomplexes: one consisting of SGCB, SGCD and SGCG and the other consisting of SGCB and SGCD. The association between SGCB and SGCG is particularly strong while SGCA is loosely associated with the other sarcoglycans. Interacts with FLNC. In terms of tissue distribution, expressed in skeletal and heart muscle.

The protein localises to the cell membrane. The protein resides in the sarcolemma. It is found in the cytoplasm. Its subcellular location is the cytoskeleton. Its function is as follows. Component of the sarcoglycan complex, a subcomplex of the dystrophin-glycoprotein complex which forms a link between the F-actin cytoskeleton and the extracellular matrix. In Homo sapiens (Human), this protein is Gamma-sarcoglycan (SGCG).